Consider the following 300-residue polypeptide: Nuclear egress protein 1 (300 aa).

A CCCH-type zinc finger spans residues 90 to 217; the sequence is CLSLSGMGYY…YIVFPGKALH (128 aa).

It belongs to the herpesviridae NEC1 protein family. As to quaternary structure, forms a heterohexameric complex with NEC2. Interacts with capsid vertex specific component 2/CVC2; this interaction directs the capsid to the host inner nuclear membrane to initiate budding. Post-translationally, phosphorylated at serine residues in the N-terminus. This phosphorylation regulates the localization within the inner nuclear membrane.

The protein resides in the host nucleus inner membrane. Its function is as follows. Plays an essential role in virion nuclear egress, the first step of virion release from infected cell. Within the host nucleus, NEC1 interacts with the newly formed capsid through the vertexes and directs it to the inner nuclear membrane by associating with NEC2. Induces the budding of the capsid at the inner nuclear membrane as well as its envelopment into the perinuclear space. There, the NEC1/NEC2 complex promotes the fusion of the enveloped capsid with the outer nuclear membrane and the subsequent release of the viral capsid into the cytoplasm where it will reach the secondary budding sites in the host Golgi or trans-Golgi network. This is Nuclear egress protein 1 from Gallid herpesvirus 2 (strain Chicken/Md5/ATCC VR-987) (GaHV-2).